The sequence spans 248 residues: MTGMVTERRSVHFIAEALTENCREIFERRRHVLVGISPFNSRFSEDYIYRLIGWAKAQFKSVSVLLAGHEAANLLEALGTPRGKAERKVRKEVSRNRRFAERALVAHGGDPKAIHTFSDFIDNKAYQLLRQEVEHAFFEQPHFRHACLDMSREAIIGRARGVSLMMEEVSEDMLNLAVEYVIAELPFFIGAPDILEVEETLLAYHRPWKLGEKISNHEFSICMRPNQGYLIVQEMAQMLSEKRITSEG.

Residue serine 37 is the Nucleophile of the active site. Substrate-binding positions include asparagine 40, tyrosine 180–glutamate 184, tyrosine 204, and lysine 209–leucine 210.

The protein belongs to the CDPS family. As to quaternary structure, monomer.

The catalysed reaction is 2 L-leucyl-tRNA(Leu) = cyclo(L-leucyl-L-leucyl) + 2 tRNA(Leu) + 2 H(+). Functionally, involved in the biosynthesis of pulcherrimin, a red extracellular pigment. It uses activated amino acids in the form of aminoacyl-tRNAs (aa-tRNAs) as substrates to catalyze the ATP-independent formation of cyclodipeptides which are intermediates in diketopiperazine (DKP) biosynthetic pathways. Catalyzes the formation of cyclo(L-Leu-L-Leu) (cLL) from L-leucyl-tRNA(Leu). Can also incorporate various nonpolar residues, such as L-phenylalanine, L-leucine and methionine, into cyclodipeptides. The chain is Cyclo(L-leucyl-L-leucyl) synthase (yvmC) from Bacillus subtilis (strain 168).